We begin with the raw amino-acid sequence, 48 residues long: Histone H4 (48 aa).

Residues 1–14 show a composition bias toward gly residues; sequence MGGKGGKGGKGLGK. Positions 1–23 are disordered; it reads MGGKGGKGGKGLGKVGAKKRHSR.

Belongs to the histone H4 family. The nucleosome is a histone octamer containing two molecules each of H2A, H2B, H3 and H4 assembled in one H3-H4 heterotetramer and two H2A-H2B heterodimers. The octamer wraps approximately 147 bp of DNA.

Its subcellular location is the nucleus. The protein resides in the chromosome. Core component of nucleosome. Nucleosomes wrap and compact DNA into chromatin, limiting DNA accessibility to the cellular machineries which require DNA as a template. Histones thereby play a central role in transcription regulation, DNA repair, DNA replication and chromosomal stability. DNA accessibility is regulated via a complex set of post-translational modifications of histones, also called histone code, and nucleosome remodeling. This chain is Histone H4, found in Blepharisma japonicum.